The following is a 153-amino-acid chain: Transcriptional repressor NrdR (153 aa).

A zinc finger spans residues 3 to 34 (CPFCGYEDTRVLDSRELSEGRAIRRRRECPQC). An ATP-cone domain is found at 49–139 (ITVIKKDGRR…VYKDFREIDQ (91 aa)).

This sequence belongs to the NrdR family. Zn(2+) is required as a cofactor.

Negatively regulates transcription of bacterial ribonucleotide reductase nrd genes and operons by binding to NrdR-boxes. This chain is Transcriptional repressor NrdR, found in Fervidobacterium nodosum (strain ATCC 35602 / DSM 5306 / Rt17-B1).